A 318-amino-acid chain; its full sequence is Transaldolase (318 aa).

K132 serves as the catalytic Schiff-base intermediate with substrate.

This sequence belongs to the transaldolase family. Type 1 subfamily. In terms of assembly, homodimer.

It localises to the cytoplasm. The catalysed reaction is D-sedoheptulose 7-phosphate + D-glyceraldehyde 3-phosphate = D-erythrose 4-phosphate + beta-D-fructose 6-phosphate. It functions in the pathway carbohydrate degradation; pentose phosphate pathway; D-glyceraldehyde 3-phosphate and beta-D-fructose 6-phosphate from D-ribose 5-phosphate and D-xylulose 5-phosphate (non-oxidative stage): step 2/3. Functionally, transaldolase is important for the balance of metabolites in the pentose-phosphate pathway. This Shewanella pealeana (strain ATCC 700345 / ANG-SQ1) protein is Transaldolase.